A 66-amino-acid polypeptide reads, in one-letter code: Conotoxin Lt3.5 (66 aa).

The N-terminal stretch at 1 to 20 (MMSKLGALLTICLLLFPLTA) is a signal peptide. A propeptide spanning residues 21–53 (VPLDGDQPLDRHAERMHDGISPKRHPWFDPVKR) is cleaved from the precursor. Intrachain disulfides connect cysteine 54-cysteine 66, cysteine 55-cysteine 62, and cysteine 59-cysteine 65. Proline 64 bears the 4-hydroxyproline mark.

The protein belongs to the conotoxin M superfamily. As to expression, expressed by the venom duct.

Its subcellular location is the secreted. The polypeptide is Conotoxin Lt3.5 (Conus litteratus (Lettered cone)).